Reading from the N-terminus, the 299-residue chain is Dye-decolorizing peroxidase YfeX (299 aa).

His-215 is a binding site for heme.

The protein belongs to the DyP-type peroxidase family. Requires heme b as cofactor.

It is found in the cytoplasm. Has both general peroxidase activity and dye-decolorizing activity. Can catalyze the oxidation of 2,2'-azino-bis(3-ethylbenzothiazoline-6-sulphonic acid) (ABTS), and the phenolic compounds guaiacol and catechol. Also decolorizes the anthraquinone dye reactive blue 19 (RB19). The polypeptide is Dye-decolorizing peroxidase YfeX (Escherichia coli O157:H7).